Reading from the N-terminus, the 1385-residue chain is Probable serine/threonine-protein kinase DDB_G0268876 (1385 aa).

A Protein kinase domain is found at 758–1008 (LELTKEIGRG…QQIITYLENL (251 aa)). ATP is bound by residues 764–772 (IGRGVSGVV) and Lys785. Residue Asp878 is the Proton acceptor of the active site. 3 disordered regions span residues 1040 to 1074 (GGNS…ENKI), 1091 to 1266 (EVSK…SVGG), and 1287 to 1339 (ISSS…NNNN). The span at 1055–1073 (VSGSNNNESSTAVSLNENK) shows a compositional bias: polar residues. Positions 1107–1144 (SSSTSSSPSTLSAPQSPVGSTSPMGSTSTSPISNNNNR) are enriched in low complexity. Basic and acidic residues predominate over residues 1145–1162 (PTHDHQQPHQVKWERIVP). Low complexity-rich tracts occupy residues 1189–1232 (NNNN…SSGI), 1242–1266 (FLSS…SVGG), and 1295–1339 (NNNN…NNNN).

Belongs to the protein kinase superfamily. TKL Ser/Thr protein kinase family.

It catalyses the reaction L-seryl-[protein] + ATP = O-phospho-L-seryl-[protein] + ADP + H(+). It carries out the reaction L-threonyl-[protein] + ATP = O-phospho-L-threonyl-[protein] + ADP + H(+). This Dictyostelium discoideum (Social amoeba) protein is Probable serine/threonine-protein kinase DDB_G0268876.